A 422-amino-acid polypeptide reads, in one-letter code: Cotranscriptional regulator ARB2A homolog (422 aa).

Residues 1–19 (MKLEIKCFIICKVLPLVWL) form the signal peptide. The tract at residues 213–253 (KSKVPADQPSPDSSDEPAEKRERRERNPKETKKRRDFYEKY) is disordered. A compositionally biased stretch (basic and acidic residues) spans 229 to 242 (PAEKRERRERNPKE). Ser299 serves as the catalytic Nucleophile. Residues 403 to 422 (NTKTKPTPTRRSNRIKHEDL) form a disordered region.

This sequence belongs to the ARB2A family.

Its subcellular location is the nucleus. The protein localises to the cytoplasm. In terms of biological role, may play role in the regulation of alternative splicing. May have hydrolase activity. In Xenopus tropicalis (Western clawed frog), this protein is Cotranscriptional regulator ARB2A homolog (arb2a).